A 344-amino-acid chain; its full sequence is MTADTSLRPADHPAVKSGKVGVLLVNLGTPDGTDYTSMRRYLREFLTDRRVIEWSPWKWYPILFGVVLNTRPRKVGKAYELIWNKEKNESYLRTYTRNQSELMAEHLKDLATVKVDWAMRYGTPSIASRIEALKQEGCDRIVLFPLYPQYAAATTATVNDKAFQKLLSMRWQPALRTVPDYHDDETYIEALATSVEKHLATLDWKPEMLLASFHGIPMSYFKQGDPYYCQCQKTGRLLRERLGLTKENFMVTFQSRFGPEEWLQPYTDKTVEKLAQDGVKRIAVINPGFVSDCLETLEEIAEQAAHSFHENGGEKFAHIPCLNDGEDGMTVLEKVVRRELQGWI.

His214 and Glu295 together coordinate Fe cation.

The protein belongs to the ferrochelatase family.

The protein localises to the cytoplasm. The catalysed reaction is heme b + 2 H(+) = protoporphyrin IX + Fe(2+). It participates in porphyrin-containing compound metabolism; protoheme biosynthesis; protoheme from protoporphyrin-IX: step 1/1. Its function is as follows. Catalyzes the ferrous insertion into protoporphyrin IX. This is Ferrochelatase from Rhizobium leguminosarum bv. trifolii (strain WSM2304).